A 255-amino-acid chain; its full sequence is Thiazole synthase (255 aa).

The active-site Schiff-base intermediate with DXP is the Lys-97. 1-deoxy-D-xylulose 5-phosphate contacts are provided by residues Gly-158, 184–185, and 206–207; these read AG and NT.

Belongs to the ThiG family. In terms of assembly, homotetramer. Forms heterodimers with either ThiH or ThiS.

The protein resides in the cytoplasm. It carries out the reaction [ThiS sulfur-carrier protein]-C-terminal-Gly-aminoethanethioate + 2-iminoacetate + 1-deoxy-D-xylulose 5-phosphate = [ThiS sulfur-carrier protein]-C-terminal Gly-Gly + 2-[(2R,5Z)-2-carboxy-4-methylthiazol-5(2H)-ylidene]ethyl phosphate + 2 H2O + H(+). It participates in cofactor biosynthesis; thiamine diphosphate biosynthesis. Catalyzes the rearrangement of 1-deoxy-D-xylulose 5-phosphate (DXP) to produce the thiazole phosphate moiety of thiamine. Sulfur is provided by the thiocarboxylate moiety of the carrier protein ThiS. In vitro, sulfur can be provided by H(2)S. The chain is Thiazole synthase from Moorella thermoacetica (strain ATCC 39073 / JCM 9320).